Consider the following 504-residue polypeptide: Chromosomal replication initiator protein DnaA (504 aa).

The interval methionine 1–aspartate 109 is domain I, interacts with DnaA modulators. A disordered region spans residues alanine 98–alanine 162. The segment covering aspartate 109–alanine 125 has biased composition (low complexity). The segment at serine 110–valine 163 is domain II. Residues asparagine 164–alanine 380 are domain III, AAA+ region. Residues glycine 208, glycine 210, lysine 211, and threonine 212 each coordinate ATP. A domain IV, binds dsDNA region spans residues serine 381–arginine 504.

The protein belongs to the DnaA family. In terms of assembly, oligomerizes as a right-handed, spiral filament on DNA at oriC.

The protein resides in the cytoplasm. Functionally, plays an essential role in the initiation and regulation of chromosomal replication. ATP-DnaA binds to the origin of replication (oriC) to initiate formation of the DNA replication initiation complex once per cell cycle. Binds the DnaA box (a 9 base pair repeat at the origin) and separates the double-stranded (ds)DNA. Forms a right-handed helical filament on oriC DNA; dsDNA binds to the exterior of the filament while single-stranded (ss)DNA is stabiized in the filament's interior. The ATP-DnaA-oriC complex binds and stabilizes one strand of the AT-rich DNA unwinding element (DUE), permitting loading of DNA polymerase. After initiation quickly degrades to an ADP-DnaA complex that is not apt for DNA replication. Binds acidic phospholipids. Its function is as follows. The probable consensus sequence for the DnaA box of this bacterium is 5'-TT(G/C)TCCACA-3'. The polypeptide is Chromosomal replication initiator protein DnaA (Mycolicibacterium smegmatis (strain ATCC 700084 / mc(2)155) (Mycobacterium smegmatis)).